Here is a 429-residue protein sequence, read N- to C-terminus: Adenosylhomocysteinase (429 aa).

Substrate contacts are provided by threonine 64, aspartate 136, and glutamate 161. NAD(+) is bound at residue threonine 162–threonine 164. Lysine 191 and aspartate 195 together coordinate substrate. NAD(+) contacts are provided by residues asparagine 196, glycine 225–glycine 230, glutamate 248, asparagine 283, serine 304–histidine 306, and asparagine 351.

The protein belongs to the adenosylhomocysteinase family. The cofactor is NAD(+).

It is found in the cytoplasm. It catalyses the reaction S-adenosyl-L-homocysteine + H2O = L-homocysteine + adenosine. Its pathway is amino-acid biosynthesis; L-homocysteine biosynthesis; L-homocysteine from S-adenosyl-L-homocysteine: step 1/1. May play a key role in the regulation of the intracellular concentration of adenosylhomocysteine. The protein is Adenosylhomocysteinase of Gloeothece citriformis (strain PCC 7424) (Cyanothece sp. (strain PCC 7424)).